The following is a 265-amino-acid chain: Hydroxyethylthiazole kinase (265 aa).

Substrate is bound at residue Met50. Arg125 and Thr171 together coordinate ATP. Gly198 provides a ligand contact to substrate.

The protein belongs to the Thz kinase family. Requires Mg(2+) as cofactor.

The catalysed reaction is 5-(2-hydroxyethyl)-4-methylthiazole + ATP = 4-methyl-5-(2-phosphooxyethyl)-thiazole + ADP + H(+). It functions in the pathway cofactor biosynthesis; thiamine diphosphate biosynthesis; 4-methyl-5-(2-phosphoethyl)-thiazole from 5-(2-hydroxyethyl)-4-methylthiazole: step 1/1. Its function is as follows. Catalyzes the phosphorylation of the hydroxyl group of 4-methyl-5-beta-hydroxyethylthiazole (THZ). This chain is Hydroxyethylthiazole kinase, found in Salmonella arizonae (strain ATCC BAA-731 / CDC346-86 / RSK2980).